The primary structure comprises 444 residues: uncharacterized protein (444 aa).

A chloroplast-targeting transit peptide spans 1–72; it reads MGFLTAAIRV…RPMWNVSFLR (72 aa). The tract at residues 77-107 is disordered; that stretch reads HSTPARETGDDDISKSENSSSQDGDSCTKLK. Residues 92-101 show a composition bias toward polar residues; sequence SENSSSQDGD. The CRM domain maps to 175 to 272; the sequence is EILTPEEHFY…KNYVQPPTEI (98 aa). Residues 292-355 are a coiled coil; that stretch reads DALRAVRKYI…CLEDEQEEDE (64 aa). Disordered stretches follow at residues 344 to 364 and 392 to 426; these read EECL…ATDS and KFPA…PNFD. Over residues 346–357 the composition is skewed to acidic residues; that stretch reads CLEDEQEEDEAG. Positions 406-426 are enriched in basic and acidic residues; that stretch reads DLGKAKSEGEENDDDKSPNFD.

Its subcellular location is the plastid. The protein resides in the chloroplast. This is an uncharacterized protein from Arabidopsis thaliana (Mouse-ear cress).